We begin with the raw amino-acid sequence, 800 residues long: MGSSKKHRGEKEAAGTTAAAGTGGATEQPPRHREHKKHKHRSGGSGGSGGERRKRSRERGGERGSGRRGAEAEARSSTHGRERSQAEPSERRVKREKRDDGYEAAASSKTSSGDASSLSIEETNKLRAKLGLKPLEVNAIKKEAGTKEEPVTADVINPMALRQREELREKLAAAKEKRLLNQKLGKIKTLGEDDPWLDDTAAWIERSRQLQKEKDLAEKRAKLLEEMDQEFGVSTLVEEEFGQRRQDLYSARDLQGLTVEHAIDSFREGETMILTLKDKGVLQEEEDVLVNVNLVDKERAEKNVELRKKKPDYLPYAEDESVDDLAQQKPRSILSKYDEELEGERPHSFRLEQGGTADGLRERELEEIRAKLRLQAQSLSTVGPRLASEYLTPEEMVTFKKTKRRVKKIRKKEKEVVVRADDLLPLGDQTQDGDFGSRLRGRGRRRVSEVEEEKEPVPQPLPSDDTRVENMDISDEEEGGAPPPGSPQVLEEDEAELELQKQLEKGRRLRQLQQLQQLRDSGEKVVEIVKKLESRQRGWEEDEDPERKGAIVFNATSEFCRTLGEIPTYGLAGNREEQEELMDFERDEERSANGGSESDGEENIGWSTVNLDEEKQQQDFSASSTTILDEEPIVNRGLAAALLLCQNKGLLETTVQKVARVKAPNKSLPSAVYCIEDKMAIDDKYSRREEYRGFTQDFKEKDGYKPDVKIEYVDETGRKLTPKEAFRQLSHRFHGKGSGKMKTERRMKKLDEEALLKKMSSSDTPLGTVALLQEKQKAQKTPYIVLSGSGKSMNANTITK.

Residues methionine 1–isoleucine 120 form a disordered region. Residues histidine 32–serine 42 are compositionally biased toward basic residues. A compositionally biased stretch (basic and acidic residues) spans glutamate 58–glycine 101. Residues alanine 104–serine 119 are compositionally biased toward low complexity. Residues lysine 125 and lysine 133 each participate in a glycyl lysine isopeptide (Lys-Gly) (interchain with G-Cter in SUMO2) cross-link. A Glycyl lysine isopeptide (Lys-Gly) (interchain with G-Cter in SUMO1); alternate cross-link involves residue lysine 141. Lysine 141 is covalently cross-linked (Glycyl lysine isopeptide (Lys-Gly) (interchain with G-Cter in SUMO2); alternate). Residues lysine 147 and lysine 188 each participate in a glycyl lysine isopeptide (Lys-Gly) (interchain with G-Cter in SUMO2) cross-link. Residues asparagine 157–phenylalanine 231 adopt a coiled-coil conformation. Threonine 189 bears the Phosphothreonine mark. Lysine 277 participates in a covalent cross-link: Glycyl lysine isopeptide (Lys-Gly) (interchain with G-Cter in SUMO2). The interval proline 311–proline 330 is disordered. Serine 321 carries the phosphoserine modification. Glycyl lysine isopeptide (Lys-Gly) (interchain with G-Cter in SUMO2) cross-links involve residues lysine 329 and lysine 336. Phosphoserine is present on serine 348. Threonine 392 bears the Phosphothreonine mark. Glycyl lysine isopeptide (Lys-Gly) (interchain with G-Cter in SUMO2) cross-links involve residues lysine 400 and lysine 414. Positions arginine 419–leucine 497 are disordered. Threonine 430 is modified (phosphothreonine). 4 positions are modified to phosphoserine: serine 448, serine 474, serine 486, and serine 521. Positions leucine 490–glutamate 533 form a coiled coil. A Glycyl lysine isopeptide (Lys-Gly) (interchain with G-Cter in SUMO2) cross-link involves residue lysine 548. Positions leucine 571–isoleucine 604 are disordered. 4 positions are modified to phosphoserine: serine 591, serine 596, serine 598, and serine 621. Glycyl lysine isopeptide (Lys-Gly) (interchain with G-Cter in SUMO2) cross-links involve residues lysine 648, lysine 657, and lysine 684. Residue threonine 695 is modified to Phosphothreonine. Residues lysine 699, lysine 709, lysine 723, lysine 749, and lysine 758 each participate in a glycyl lysine isopeptide (Lys-Gly) (interchain with G-Cter in SUMO2) cross-link. Residue serine 761 is modified to Phosphoserine. Threonine 764 is subject to Phosphothreonine. Glycyl lysine isopeptide (Lys-Gly) (interchain with G-Cter in SUMO2) cross-links involve residues lysine 775 and lysine 780. Residue serine 789 is modified to Phosphoserine. Lysine 791 participates in a covalent cross-link: Glycyl lysine isopeptide (Lys-Gly) (interchain with G-Cter in SUMO2).

The protein belongs to the SNU66/SART1 family. Identified in the spliceosome C complex. Component of the U4/U6-U5 tri-snRNP complex composed of the U4, U6 and U5 snRNAs and at least PRPF3, PRPF4, PRPF6, PRPF8, PRPF31, SNRNP200, TXNL4A, SNRNP40, DDX23, CD2BP2, PPIH, SNU13, EFTUD2, SART1 and USP39. Interacts with UBL5. Interacts with IVNS1ABP (via Kelch repeats). Post-translationally, sumoylated with SUMO2. As to expression, ubiquitously expressed.

The protein resides in the nucleus. Functionally, plays a role in mRNA splicing as a component of the U4/U6-U5 tri-snRNP, one of the building blocks of the spliceosome. May also bind to DNA. The polypeptide is U4/U6.U5 tri-snRNP-associated protein 1 (SART1) (Homo sapiens (Human)).